We begin with the raw amino-acid sequence, 176 residues long: Ubiquitin-conjugating enzyme E2-20 kDa (176 aa).

Positions 1 to 20 (MDSDMQNQNPHTNSKNSSSA) are enriched in polar residues. The disordered stretch occupies residues 1-25 (MDSDMQNQNPHTNSKNSSSAGMAVD). Residues 28-175 (SVTKRLRSEL…LMQRYKEIDE (148 aa)) enclose the UBC core domain. The active-site Glycyl thioester intermediate is C113.

Belongs to the ubiquitin-conjugating enzyme family.

The catalysed reaction is S-ubiquitinyl-[E1 ubiquitin-activating enzyme]-L-cysteine + [E2 ubiquitin-conjugating enzyme]-L-cysteine = [E1 ubiquitin-activating enzyme]-L-cysteine + S-ubiquitinyl-[E2 ubiquitin-conjugating enzyme]-L-cysteine.. It functions in the pathway protein modification; protein ubiquitination. In terms of biological role, catalyzes the covalent attachment of ubiquitin to other proteins. In Schizosaccharomyces pombe (strain 972 / ATCC 24843) (Fission yeast), this protein is Ubiquitin-conjugating enzyme E2-20 kDa (ubc11).